We begin with the raw amino-acid sequence, 1030 residues long: Arrestin domain-containing protein F (1030 aa).

2 disordered regions span residues 1 to 27 (MEII…GSKR) and 119 to 154 (ENKN…NNPL). Residues 128-137 (NFDDGEEDDT) show a composition bias toward acidic residues. The segment covering 142 to 152 (NINNKNNNNNN) has biased composition (low complexity). Coiled coils occupy residues 320 to 374 (HQLE…HNNN) and 544 to 577 (QKLN…IRDQ). Disordered regions lie at residues 539–572 (SPQS…NSES) and 885–931 (NNEK…NNNN). The span at 547–562 (NKKDKEKEKEKEKEND) shows a compositional bias: basic and acidic residues. The span at 910–931 (SPSSSSFLSNSSNTSSSKNNNN) shows a compositional bias: low complexity.

This sequence belongs to the arrestin family.

In Dictyostelium discoideum (Social amoeba), this protein is Arrestin domain-containing protein F (adcF).